A 329-amino-acid polypeptide reads, in one-letter code: Tryptophan--tRNA ligase (329 aa).

ATP is bound by residues 9 to 11 (QPS) and 17 to 18 (GN). Residues 10 to 18 (PSGIPTIGN) carry the 'HIGH' region motif. D133 is an L-tryptophan binding site. ATP is bound by residues 145–147 (GDD), V184, and 193–197 (KMSKS). Positions 193 to 197 (KMSKS) match the 'KMSKS' region motif.

The protein belongs to the class-I aminoacyl-tRNA synthetase family. In terms of assembly, homodimer.

Its subcellular location is the cytoplasm. The catalysed reaction is tRNA(Trp) + L-tryptophan + ATP = L-tryptophyl-tRNA(Trp) + AMP + diphosphate + H(+). In terms of biological role, catalyzes the attachment of tryptophan to tRNA(Trp). This chain is Tryptophan--tRNA ligase, found in Staphylococcus aureus (strain MSSA476).